Reading from the N-terminus, the 552-residue chain is CTP synthase (552 aa).

Residues 1–270 form an amidoligase domain region; sequence MTKYVFVTGG…DRIICDELKL (270 aa). Ser13 serves as a coordination point for CTP. Ser13 contributes to the UTP binding site. ATP-binding positions include 14 to 19 and Asp71; that span reads SLGKGI. Mg(2+) is bound by residues Asp71 and Glu144. CTP contacts are provided by residues 151-153, 191-196, and Lys227; these read DIE and KTKPTQ. UTP is bound by residues 191–196 and Lys227; that span reads KTKPTQ. Residues 295 to 547 form the Glutamine amidotransferase type-1 domain; the sequence is TIGMVGKYVD…VEAALANKQA (253 aa). Gly356 is a binding site for L-glutamine. Catalysis depends on Cys383, which acts as the Nucleophile; for glutamine hydrolysis. L-glutamine contacts are provided by residues 384–387, Glu407, and Arg473; that span reads LGMQ. Catalysis depends on residues His520 and Glu522.

This sequence belongs to the CTP synthase family. Homotetramer.

The catalysed reaction is UTP + L-glutamine + ATP + H2O = CTP + L-glutamate + ADP + phosphate + 2 H(+). The enzyme catalyses L-glutamine + H2O = L-glutamate + NH4(+). It catalyses the reaction UTP + NH4(+) + ATP = CTP + ADP + phosphate + 2 H(+). It functions in the pathway pyrimidine metabolism; CTP biosynthesis via de novo pathway; CTP from UDP: step 2/2. Its activity is regulated as follows. Allosterically activated by GTP, when glutamine is the substrate; GTP has no effect on the reaction when ammonia is the substrate. The allosteric effector GTP functions by stabilizing the protein conformation that binds the tetrahedral intermediate(s) formed during glutamine hydrolysis. Inhibited by the product CTP, via allosteric rather than competitive inhibition. In terms of biological role, catalyzes the ATP-dependent amination of UTP to CTP with either L-glutamine or ammonia as the source of nitrogen. Regulates intracellular CTP levels through interactions with the four ribonucleotide triphosphates. The protein is CTP synthase of Burkholderia vietnamiensis (strain G4 / LMG 22486) (Burkholderia cepacia (strain R1808)).